A 171-amino-acid polypeptide reads, in one-letter code: Peptide deformylase (171 aa).

2 residues coordinate Fe cation: C94 and H136. E137 is a catalytic residue. H140 is a binding site for Fe cation.

Belongs to the polypeptide deformylase family. Requires Fe(2+) as cofactor.

The catalysed reaction is N-terminal N-formyl-L-methionyl-[peptide] + H2O = N-terminal L-methionyl-[peptide] + formate. Its function is as follows. Removes the formyl group from the N-terminal Met of newly synthesized proteins. Requires at least a dipeptide for an efficient rate of reaction. N-terminal L-methionine is a prerequisite for activity but the enzyme has broad specificity at other positions. In Afipia carboxidovorans (strain ATCC 49405 / DSM 1227 / KCTC 32145 / OM5) (Oligotropha carboxidovorans), this protein is Peptide deformylase.